The following is a 426-amino-acid chain: Glutamate-1-semialdehyde 2,1-aminomutase (426 aa).

The residue at position 265 (K265) is an N6-(pyridoxal phosphate)lysine.

This sequence belongs to the class-III pyridoxal-phosphate-dependent aminotransferase family. HemL subfamily. As to quaternary structure, homodimer. The cofactor is pyridoxal 5'-phosphate.

It localises to the cytoplasm. The enzyme catalyses (S)-4-amino-5-oxopentanoate = 5-aminolevulinate. It participates in porphyrin-containing compound metabolism; protoporphyrin-IX biosynthesis; 5-aminolevulinate from L-glutamyl-tRNA(Glu): step 2/2. This chain is Glutamate-1-semialdehyde 2,1-aminomutase, found in Salmonella paratyphi A (strain ATCC 9150 / SARB42).